A 277-amino-acid polypeptide reads, in one-letter code: 3-methyl-2-oxobutanoate hydroxymethyltransferase (277 aa).

Positions 42 and 81 each coordinate Mg(2+). 3-methyl-2-oxobutanoate-binding positions include 42–43 (DS), D81, and K110. Position 112 (E112) interacts with Mg(2+). E179 functions as the Proton acceptor in the catalytic mechanism.

The protein belongs to the PanB family. As to quaternary structure, homodecamer; pentamer of dimers. Mg(2+) serves as cofactor.

The protein resides in the cytoplasm. The catalysed reaction is 3-methyl-2-oxobutanoate + (6R)-5,10-methylene-5,6,7,8-tetrahydrofolate + H2O = 2-dehydropantoate + (6S)-5,6,7,8-tetrahydrofolate. It participates in cofactor biosynthesis; (R)-pantothenate biosynthesis; (R)-pantoate from 3-methyl-2-oxobutanoate: step 1/2. In terms of biological role, catalyzes the reversible reaction in which hydroxymethyl group from 5,10-methylenetetrahydrofolate is transferred onto alpha-ketoisovalerate to form ketopantoate. In Anaplasma marginale (strain Florida), this protein is 3-methyl-2-oxobutanoate hydroxymethyltransferase.